The chain runs to 465 residues: UDP-N-acetylmuramoylalanine--D-glutamate ligase (465 aa).

Residue 124–130 (GSDGKTT) participates in ATP binding.

The protein belongs to the MurCDEF family.

It localises to the cytoplasm. It catalyses the reaction UDP-N-acetyl-alpha-D-muramoyl-L-alanine + D-glutamate + ATP = UDP-N-acetyl-alpha-D-muramoyl-L-alanyl-D-glutamate + ADP + phosphate + H(+). It functions in the pathway cell wall biogenesis; peptidoglycan biosynthesis. In terms of biological role, cell wall formation. Catalyzes the addition of glutamate to the nucleotide precursor UDP-N-acetylmuramoyl-L-alanine (UMA). The polypeptide is UDP-N-acetylmuramoylalanine--D-glutamate ligase (Ruminiclostridium cellulolyticum (strain ATCC 35319 / DSM 5812 / JCM 6584 / H10) (Clostridium cellulolyticum)).